The sequence spans 356 residues: Histidinol-phosphate aminotransferase 1 (356 aa).

Lys-217 is subject to N6-(pyridoxal phosphate)lysine.

It belongs to the class-II pyridoxal-phosphate-dependent aminotransferase family. Histidinol-phosphate aminotransferase subfamily. In terms of assembly, homodimer. Pyridoxal 5'-phosphate serves as cofactor.

The enzyme catalyses L-histidinol phosphate + 2-oxoglutarate = 3-(imidazol-4-yl)-2-oxopropyl phosphate + L-glutamate. It participates in amino-acid biosynthesis; L-histidine biosynthesis; L-histidine from 5-phospho-alpha-D-ribose 1-diphosphate: step 7/9. This Burkholderia mallei (strain ATCC 23344) protein is Histidinol-phosphate aminotransferase 1.